Consider the following 142-residue polypeptide: Movement protein (142 aa).

The segment at Met-1–Tyr-142 is disordered. Polar residues-rich tracts occupy residues Arg-9–Glu-22 and Leu-33–Ala-43. Residues Ser-50 to Pro-62 show a composition bias toward low complexity. Polar residues-rich tracts occupy residues Met-74 to Pro-95 and Thr-113 to Thr-124. The segment covering Lys-125–Tyr-142 has biased composition (basic and acidic residues).

It belongs to the luteoviruses movement protein family.

Functionally, transports viral genome to neighboring plant cells directly through plasmosdesmata, without any budding. The movement protein allows efficient cell to cell propagation, by bypassing the host cell wall barrier. The protein is Movement protein of Cicer arietinum (Chickpea).